Here is a 469-residue protein sequence, read N- to C-terminus: Biotin synthase (469 aa).

The Radical SAM core domain occupies 51–278 (MTVKVNYLVN…DKEIRMAGGR (228 aa)). The [4Fe-4S] cluster site is built by Cys66, Cys70, and Cys73. 4 residues coordinate [2Fe-2S] cluster: Cys110, Cys143, Cys203, and Arg273. Positions 326–469 (AGPDPSRDRH…GAGTSVAPNA (144 aa)) are disordered. 2 stretches are compositionally biased toward low complexity: residues 363–384 (GSAAGSSSGDGSAPDGGRAPAD) and 405–428 (AGGPARTRSAAASSAPTGAGMSPA).

It belongs to the radical SAM superfamily. Biotin synthase family. As to quaternary structure, homodimer. Requires [4Fe-4S] cluster as cofactor. It depends on [2Fe-2S] cluster as a cofactor.

The enzyme catalyses (4R,5S)-dethiobiotin + (sulfur carrier)-SH + 2 reduced [2Fe-2S]-[ferredoxin] + 2 S-adenosyl-L-methionine = (sulfur carrier)-H + biotin + 2 5'-deoxyadenosine + 2 L-methionine + 2 oxidized [2Fe-2S]-[ferredoxin]. It participates in cofactor biosynthesis; biotin biosynthesis; biotin from 7,8-diaminononanoate: step 2/2. In terms of biological role, catalyzes the conversion of dethiobiotin (DTB) to biotin by the insertion of a sulfur atom into dethiobiotin via a radical-based mechanism. The chain is Biotin synthase from Kocuria rhizophila (strain ATCC 9341 / DSM 348 / NBRC 103217 / DC2201).